A 232-amino-acid polypeptide reads, in one-letter code: Anti-sigma-K factor RskA (232 aa).

Topologically, residues methionine 1–threonine 91 are cytoplasmic. A helical membrane pass occupies residues alanine 92–leucine 112. Over threonine 113–arginine 232 the chain is Extracellular.

This sequence belongs to the anti-sigma-K factor family.

It localises to the cell membrane. Its function is as follows. An anti-sigma factor for extracytoplasmic function (ECF) sigma factor SigK. ECF sigma factors are held in an inactive form by an anti-sigma factor until released by regulated intramembrane proteolysis (RIP). RIP occurs when an extracytoplasmic signal triggers a concerted proteolytic cascade to transmit information and elicit cellular responses. The membrane-spanning regulatory substrate protein is first cut extracytoplasmically (site-1 protease, S1P), then within the membrane itself (site-2 protease, S2P, Rip1), while cytoplasmic proteases finish degrading the regulatory protein, liberating the sigma factor. This chain is Anti-sigma-K factor RskA (rskA), found in Mycobacterium ulcerans (strain Agy99).